We begin with the raw amino-acid sequence, 276 residues long: Extracellular metalloprotease VDBG_07883 (276 aa).

The first 17 residues, 1 to 17 (MQSKFLWIAAASAATAA), serve as a signal peptide directing secretion. 2 N-linked (GlcNAc...) asparagine glycosylation sites follow: N70 and N102. Residue H191 coordinates Zn(2+). Residue E192 is part of the active site. H195 serves as a coordination point for Zn(2+). N222 carries N-linked (GlcNAc...) asparagine glycosylation. The cysteines at positions 227 and 254 are disulfide-linked.

This sequence belongs to the peptidase M43B family.

The protein resides in the secreted. Secreted metalloproteinase that allows assimilation of proteinaceous substrates. This is Extracellular metalloprotease VDBG_07883 from Verticillium alfalfae (strain VaMs.102 / ATCC MYA-4576 / FGSC 10136) (Verticillium wilt of alfalfa).